A 211-amino-acid polypeptide reads, in one-letter code: Superoxide dismutase [Fe] (211 aa).

Residues histidine 34, histidine 85, aspartate 171, and histidine 175 each contribute to the Fe cation site.

It belongs to the iron/manganese superoxide dismutase family. In terms of assembly, homotetramer at high temperature; homodimer at room temperature. Fe cation serves as cofactor.

The protein resides in the cytoplasm. It catalyses the reaction 2 superoxide + 2 H(+) = H2O2 + O2. Its function is as follows. Destroys superoxide anion radicals which are normally produced within the cells and which are toxic to biological systems. The sequence is that of Superoxide dismutase [Fe] (sod) from Sulfolobus acidocaldarius (strain ATCC 33909 / DSM 639 / JCM 8929 / NBRC 15157 / NCIMB 11770).